The chain runs to 1132 residues: Protein sel-1 homolog 3 (1132 aa).

The segment at 1 to 24 is disordered; sequence MQRRGAGLGWPRQQQQQPPPLAVG. N-linked (GlcNAc...) asparagine glycosylation is found at Asn-201, Asn-382, and Asn-527. Sel1-like repeat units lie at residues 575–609, 611–647, 694–730, 732–767, 768–800, 801–839, and 840–877; these read YLAV…RLSS, NLGY…DQHT, RLAQ…PALI, DYAI…QAVN, GLGW…DASY, NLGV…EGTL, and WCSL…LGHV. Ser-608 carries the post-translational modification Phosphoserine. A glycan (N-linked (GlcNAc...) asparagine) is linked at Asn-937. One copy of the Sel1-like 8 repeat lies at 952–988; the sequence is KMGDLYYYGHQNQSQDLELSVQMYAQAALDGDSQGFF. The helical transmembrane segment at 1057–1077 threads the bilayer; sequence ILHSALIYFLGTFLLSILIAW. A disordered region spans residues 1087 to 1132; it reads ASDPPPRPSQASPDTATSTASPAVTPAADASDQDQPTVTNNPEPRG. Over residues 1097-1116 the composition is skewed to low complexity; it reads ASPDTATSTASPAVTPAADA. Polar residues predominate over residues 1119-1132; sequence QDQPTVTNNPEPRG.

It is found in the membrane. The polypeptide is Protein sel-1 homolog 3 (SEL1L3) (Homo sapiens (Human)).